Here is an 821-residue protein sequence, read N- to C-terminus: MSDTTHLDPFADREADNYDNPIPSREYILEFLTQANVPMNRNDLFEALKLEGEEQYEGLRRRLRAMERDGQLVFTRRQCYALPEKLEMVKGYVIGHKDGHGWVRPEGSLNKEGDILLPHHQMRTLIHGDFVLVQPSGTDKRGRKEGRLVRILEERNGQIVGRFFFEYGYSYVVPDDSRIHHDILIPNDLRAGARMGNVVVIEITDRGTRNRGMMGKVVEVLGENMAPGMETQIAIRTHQIPHEWPAEVEQQVAGLTEEVPEEAKQGRVDLRALPLVTIDGEDARDFDDAVYCEAKKGGGWRLWVAIADVSYYVRPDTALDKEAINRGNSVYFPSQVVPMLPEVLSNGLCSLNPQVDRLCMVCEMTVSETGKLSGYKHYEAVMNSHARLTYTKVHEILEGDEELRERYKALVPHLEELHKMYQVLKSARDERGAIEFETVETKFIFNAQRKIESIEPVVRNDAHKLIEECMILANIASASLVEKAKEAALYRVHEPPGEERLTGFRDFLGELGLDLSGGLEPSPTDYANLMKQIGERPDKELIQTMLLRSMKQAVYNADNAGHFGLALKRYAHFTSPIRRYPDLLLHRAIKYLIAKQEGRNQDRWTPTGGYHYSFDDMDFYGEQCSMTERRADDATREVSDWLKCEYMQDHVGEELEGVVANVTSFGFFVRLTELHIDGLVHISTLANDYYHYDPIGQRLVGESFGAIYRLGDAVKVKVLAVNLDDRQIDFELVETSRKLRGQGKTAKKRADEARAKAQGKKEAATKGACGKSPTKSELKPQVEATRRPDSEGRSKPKKTKAPKKRKDQARKKSGKVRDKTK.

Residues 267–593 (RVDLRALPLV…LLHRAIKYLI (327 aa)) enclose the RNB domain. The 82-residue stretch at 652–733 (GEELEGVVAN…DDRQIDFELV (82 aa)) folds into the S1 motif domain. Residues 739–821 (LRGQGKTAKK…KSGKVRDKTK (83 aa)) form a disordered region. Composition is skewed to basic and acidic residues over residues 748-764 (KRAD…KEAA) and 774-794 (TKSE…EGRS). Basic residues predominate over residues 795–814 (KPKKTKAPKKRKDQARKKSG).

Belongs to the RNR ribonuclease family. RNase R subfamily.

The protein localises to the cytoplasm. It catalyses the reaction Exonucleolytic cleavage in the 3'- to 5'-direction to yield nucleoside 5'-phosphates.. 3'-5' exoribonuclease that releases 5'-nucleoside monophosphates and is involved in maturation of structured RNAs. This Vibrio cholerae serotype O1 (strain ATCC 39315 / El Tor Inaba N16961) protein is Ribonuclease R.